The primary structure comprises 124 residues: Ribonuclease pancreatic (124 aa).

The interval 1–24 (KESSAMKFQRQHMDSSGSPSTNAN) is disordered. 2 residues coordinate substrate: lysine 7 and arginine 10. Histidine 12 functions as the Proton acceptor in the catalytic mechanism. Residues 14–24 (DSSGSPSTNAN) show a composition bias toward polar residues. 4 cysteine pairs are disulfide-bonded: cysteine 26/cysteine 84, cysteine 40/cysteine 95, cysteine 58/cysteine 110, and cysteine 65/cysteine 72. N-linked (GlcNAc...) asparagine glycosylation is present at asparagine 34. Residues 41-45 (KPVNT), lysine 66, and arginine 85 each bind substrate. Catalysis depends on histidine 119, which acts as the Proton donor.

This sequence belongs to the pancreatic ribonuclease family. Monomer. Interacts with and forms tight 1:1 complexes with RNH1. Dimerization of two such complexes may occur. Interaction with RNH1 inhibits this protein. Pancreas.

It is found in the secreted. The catalysed reaction is an [RNA] containing cytidine + H2O = an [RNA]-3'-cytidine-3'-phosphate + a 5'-hydroxy-ribonucleotide-3'-[RNA].. It carries out the reaction an [RNA] containing uridine + H2O = an [RNA]-3'-uridine-3'-phosphate + a 5'-hydroxy-ribonucleotide-3'-[RNA].. Its function is as follows. Endonuclease that catalyzes the cleavage of RNA on the 3' side of pyrimidine nucleotides. Acts on single-stranded and double-stranded RNA. In Chinchilla chinchilla (Short-tailed chinchilla), this protein is Ribonuclease pancreatic (RNASE1).